Consider the following 494-residue polypeptide: Endoglucanase 22 (494 aa).

A signal peptide spans 1–21 (MKPLVCSFIVILLILLPTTIS). Asp-76 serves as the catalytic Nucleophile. His-413 is an active-site residue. Asn-468 carries an N-linked (GlcNAc...) asparagine glycan. Glu-473 is an active-site residue.

The protein belongs to the glycosyl hydrolase 9 (cellulase E) family.

It localises to the secreted. It catalyses the reaction Endohydrolysis of (1-&gt;4)-beta-D-glucosidic linkages in cellulose, lichenin and cereal beta-D-glucans.. This is Endoglucanase 22 (GH9B16) from Arabidopsis thaliana (Mouse-ear cress).